The sequence spans 288 residues: Shikimate kinase (288 aa).

81-91 serves as a coordination point for ATP; it reads PVASGLKSSSA.

Belongs to the GHMP kinase family. Archaeal shikimate kinase subfamily.

The protein resides in the cytoplasm. The catalysed reaction is shikimate + ATP = 3-phosphoshikimate + ADP + H(+). It participates in metabolic intermediate biosynthesis; chorismate biosynthesis; chorismate from D-erythrose 4-phosphate and phosphoenolpyruvate: step 5/7. The chain is Shikimate kinase from Methanothrix thermoacetophila (strain DSM 6194 / JCM 14653 / NBRC 101360 / PT) (Methanosaeta thermophila).